A 391-amino-acid polypeptide reads, in one-letter code: Elongation factor Tu (391 aa).

Residues K10–E201 form the tr-type G domain. Residues G19–T26 are G1. G19 to T26 serves as a coordination point for GTP. T26 provides a ligand contact to Mg(2+). The interval G55 to S59 is G2. The G3 stretch occupies residues D76–G79. Residues D76 to H80 and N131 to D134 contribute to the GTP site. The tract at residues N131–D134 is G4. The segment at S169–L171 is G5.

The protein belongs to the TRAFAC class translation factor GTPase superfamily. Classic translation factor GTPase family. EF-Tu/EF-1A subfamily. As to quaternary structure, monomer.

Its subcellular location is the cytoplasm. It catalyses the reaction GTP + H2O = GDP + phosphate + H(+). GTP hydrolase that promotes the GTP-dependent binding of aminoacyl-tRNA to the A-site of ribosomes during protein biosynthesis. In Brucella canis (strain ATCC 23365 / NCTC 10854 / RM-666), this protein is Elongation factor Tu.